Here is a 305-residue protein sequence, read N- to C-terminus: Glycine--tRNA ligase alpha subunit (305 aa).

The protein belongs to the class-II aminoacyl-tRNA synthetase family. Tetramer of two alpha and two beta subunits.

Its subcellular location is the cytoplasm. It catalyses the reaction tRNA(Gly) + glycine + ATP = glycyl-tRNA(Gly) + AMP + diphosphate. This Streptococcus pneumoniae (strain ATCC BAA-255 / R6) protein is Glycine--tRNA ligase alpha subunit.